A 128-amino-acid chain; its full sequence is Sulfurtransferase TusD (128 aa).

Residue C78 is the Cysteine persulfide intermediate of the active site.

Belongs to the DsrE/TusD family. As to quaternary structure, heterohexamer, formed by a dimer of trimers. The hexameric TusBCD complex contains 2 copies each of TusB, TusC and TusD. The TusBCD complex interacts with TusE.

The protein resides in the cytoplasm. Part of a sulfur-relay system required for 2-thiolation of 5-methylaminomethyl-2-thiouridine (mnm(5)s(2)U) at tRNA wobble positions. Accepts sulfur from TusA and transfers it in turn to TusE. In Salmonella typhi, this protein is Sulfurtransferase TusD.